The primary structure comprises 297 residues: Aspartate dehydrogenase domain-containing protein (297 aa).

2 positions are modified to phosphoserine: Ser-24 and Ser-172.

The protein belongs to the L-aspartate dehydrogenase family.

This Rattus norvegicus (Rat) protein is Aspartate dehydrogenase domain-containing protein.